The following is a 125-amino-acid chain: Large ribosomal subunit protein bL12 (125 aa).

It belongs to the bacterial ribosomal protein bL12 family. As to quaternary structure, homodimer. Part of the ribosomal stalk of the 50S ribosomal subunit. Forms a multimeric L10(L12)X complex, where L10 forms an elongated spine to which 2 to 4 L12 dimers bind in a sequential fashion. Binds GTP-bound translation factors.

Its function is as follows. Forms part of the ribosomal stalk which helps the ribosome interact with GTP-bound translation factors. Is thus essential for accurate translation. This chain is Large ribosomal subunit protein bL12, found in Francisella tularensis subsp. tularensis (strain SCHU S4 / Schu 4).